The chain runs to 187 residues: UPF0301 protein WIGBR1650 (187 aa).

It belongs to the UPF0301 (AlgH) family.

The protein is UPF0301 protein WIGBR1650 of Wigglesworthia glossinidia brevipalpis.